The chain runs to 508 residues: Photosystem II CP47 reaction center protein (508 aa).

6 consecutive transmembrane segments (helical) span residues serine 21–serine 36, isoleucine 101–tryptophan 115, glycine 140–phenylalanine 156, isoleucine 203–serine 218, valine 237–valine 252, and serine 457–arginine 472.

The protein belongs to the PsbB/PsbC family. PsbB subfamily. As to quaternary structure, PSII is composed of 1 copy each of membrane proteins PsbA, PsbB, PsbC, PsbD, PsbE, PsbF, PsbH, PsbI, PsbJ, PsbK, PsbL, PsbM, PsbT, PsbX, PsbY, PsbZ, Psb30/Ycf12, at least 3 peripheral proteins of the oxygen-evolving complex and a large number of cofactors. It forms dimeric complexes. Binds multiple chlorophylls. PSII binds additional chlorophylls, carotenoids and specific lipids. serves as cofactor.

It localises to the plastid. The protein localises to the chloroplast thylakoid membrane. One of the components of the core complex of photosystem II (PSII). It binds chlorophyll and helps catalyze the primary light-induced photochemical processes of PSII. PSII is a light-driven water:plastoquinone oxidoreductase, using light energy to abstract electrons from H(2)O, generating O(2) and a proton gradient subsequently used for ATP formation. This is Photosystem II CP47 reaction center protein from Illicium oligandrum (Star anise).